A 280-amino-acid chain; its full sequence is ATP synthase gamma chain (280 aa).

This sequence belongs to the ATPase gamma chain family. F-type ATPases have 2 components, CF(1) - the catalytic core - and CF(0) - the membrane proton channel. CF(1) has five subunits: alpha(3), beta(3), gamma(1), delta(1), epsilon(1). CF(0) has three main subunits: a, b and c.

The protein resides in the cell membrane. Produces ATP from ADP in the presence of a proton gradient across the membrane. The gamma chain is believed to be important in regulating ATPase activity and the flow of protons through the CF(0) complex. This chain is ATP synthase gamma chain, found in Mycoplasma capricolum subsp. capricolum (strain California kid / ATCC 27343 / NCTC 10154).